The following is a 389-amino-acid chain: ELAV-like protein 2 (389 aa).

RRM domains are found at residues 66–145, 153–233, and 306–384; these read TNLI…YARP, ANLY…FANN, and WCIF…FKTS.

The protein belongs to the RRM elav family. Part of a ribonucleoprotein (RNP) complex, at least composed of elavl1/elrA and/or elavl2/elrB, igf2bp3/vg1RBP, ddx6/Xp54, ybx2/frgy2, lsm14b/rap55b and, in a subset of RNP complexes, stau1/staufen. Binds RNA as a homooligomer. In terms of tissue distribution, expressed in brain, testis and ovary. Ovarian expression is restricted to follicle cells surrounding the oocyte. From the early tailbud stage, expression is neural-specific and is seen in both the central and peripheral nervous system in differentiating neurons but not proliferating precursors. Expressed in the retina from stage 32 with expression becoming restricted to the ganglion cell layer by later stages.

Its subcellular location is the cytoplasm. It localises to the cell cortex. Its function is as follows. Binds to poly-U elements and AU-rich elements (AREs) in the 3'-UTR of target mRNAs. Required for the vegetal localization of vg1 mRNA. Probably required for nervous system development. The protein is ELAV-like protein 2 (elavl2) of Xenopus laevis (African clawed frog).